A 231-amino-acid polypeptide reads, in one-letter code: 7-cyano-7-deazaguanine synthase (231 aa).

17 to 27 is an ATP binding site; that stretch reads FSGGMDSFTLL. Zn(2+)-binding residues include Cys-193, Cys-201, Cys-204, and Cys-207.

This sequence belongs to the QueC family. Zn(2+) is required as a cofactor.

It carries out the reaction 7-carboxy-7-deazaguanine + NH4(+) + ATP = 7-cyano-7-deazaguanine + ADP + phosphate + H2O + H(+). It participates in purine metabolism; 7-cyano-7-deazaguanine biosynthesis. Catalyzes the ATP-dependent conversion of 7-carboxy-7-deazaguanine (CDG) to 7-cyano-7-deazaguanine (preQ(0)). This chain is 7-cyano-7-deazaguanine synthase, found in Hahella chejuensis (strain KCTC 2396).